Consider the following 156-residue polypeptide: DNA mismatch endonuclease Vsr (156 aa).

Residues D51 and T63 each coordinate Mg(2+).

This sequence belongs to the Vsr family. The cofactor is Mg(2+). Zn(2+) is required as a cofactor.

Its function is as follows. Deamination of 5-methylcytosine in DNA results in T/G mismatches. If unrepaired, these mismatches can lead to C-to-T transition mutations. The very short patch (VSP) repair process in E.coli counteracts the mutagenic process by repairing the mismatches in favor of the G-containing strand. This enzyme is an endonuclease that nicks double-stranded DNA within the sequence CT(AT)GN or NT(AT)GG next to the thymidine residue that is mismatched to 2'-deoxyguanosine. The incision is mismatch-dependent and strand-specific. The protein is DNA mismatch endonuclease Vsr of Escherichia coli (strain K12).